The sequence spans 188 residues: Threonylcarbamoyl-AMP synthase (188 aa).

Positions 8–188 constitute a YrdC-like domain; sequence EGAQPGLHAY…DLATGKILRA (181 aa).

It belongs to the SUA5 family. TsaC subfamily.

It is found in the cytoplasm. It carries out the reaction L-threonine + hydrogencarbonate + ATP = L-threonylcarbamoyladenylate + diphosphate + H2O. Required for the formation of a threonylcarbamoyl group on adenosine at position 37 (t(6)A37) in tRNAs that read codons beginning with adenine. Catalyzes the conversion of L-threonine, HCO(3)(-)/CO(2) and ATP to give threonylcarbamoyl-AMP (TC-AMP) as the acyladenylate intermediate, with the release of diphosphate. This chain is Threonylcarbamoyl-AMP synthase, found in Thiobacillus denitrificans (strain ATCC 25259 / T1).